Consider the following 376-residue polypeptide: Ribonuclease D (376 aa).

The region spanning 8–176 (IQWIRDDASL…VYLALDARLS (169 aa)) is the 3'-5' exonuclease domain. Residues 214-294 (RPQQLAVLRE…AEAARLPQSE (81 aa)) form the HRDC domain.

This sequence belongs to the RNase D family. It depends on a divalent metal cation as a cofactor.

The protein resides in the cytoplasm. It carries out the reaction Exonucleolytic cleavage that removes extra residues from the 3'-terminus of tRNA to produce 5'-mononucleotides.. Exonuclease involved in the 3' processing of various precursor tRNAs. Initiates hydrolysis at the 3'-terminus of an RNA molecule and releases 5'-mononucleotides. The protein is Ribonuclease D of Pseudomonas paraeruginosa (strain DSM 24068 / PA7) (Pseudomonas aeruginosa (strain PA7)).